The chain runs to 184 residues: Photosystem I assembly protein Ycf4 (184 aa).

The next 2 membrane-spanning stretches (helical) occupy residues isoleucine 19–glycine 39 and isoleucine 57–serine 77.

This sequence belongs to the Ycf4 family.

The protein resides in the plastid. Its subcellular location is the chloroplast thylakoid membrane. In terms of biological role, seems to be required for the assembly of the photosystem I complex. This chain is Photosystem I assembly protein Ycf4, found in Nicotiana tomentosiformis (Tobacco).